We begin with the raw amino-acid sequence, 180 residues long: Large ribosomal subunit protein uL5 (180 aa).

It belongs to the universal ribosomal protein uL5 family. In terms of assembly, part of the 50S ribosomal subunit; part of the 5S rRNA/L5/L18/L25 subcomplex. Contacts the 5S rRNA and the P site tRNA. Forms a bridge to the 30S subunit in the 70S ribosome.

Its function is as follows. This is one of the proteins that bind and probably mediate the attachment of the 5S RNA into the large ribosomal subunit, where it forms part of the central protuberance. In the 70S ribosome it contacts protein S13 of the 30S subunit (bridge B1b), connecting the 2 subunits; this bridge is implicated in subunit movement. Contacts the P site tRNA; the 5S rRNA and some of its associated proteins might help stabilize positioning of ribosome-bound tRNAs. This Heliobacterium modesticaldum (strain ATCC 51547 / Ice1) protein is Large ribosomal subunit protein uL5.